The sequence spans 808 residues: Protein translocase subunit SecA 2 (808 aa).

Residues Gln-124, 142-146, and Asp-535 each bind ATP; that span reads GEGKT.

Belongs to the SecA family. Monomer and homodimer. Part of the essential Sec protein translocation apparatus which comprises SecA, SecYEG and auxiliary proteins SecDF. Other proteins may also be involved.

It localises to the cell membrane. Its subcellular location is the cytoplasm. The catalysed reaction is ATP + H2O + cellular proteinSide 1 = ADP + phosphate + cellular proteinSide 2.. Functionally, part of the Sec protein translocase complex. Interacts with the SecYEG preprotein conducting channel. Has a central role in coupling the hydrolysis of ATP to the transfer of proteins into and across the cell membrane, serving as an ATP-driven molecular motor driving the stepwise translocation of polypeptide chains across the membrane. This is Protein translocase subunit SecA 2 from Mycobacterium bovis (strain BCG / Pasteur 1173P2).